Here is a 356-residue protein sequence, read N- to C-terminus: 1,2-phenylacetyl-CoA epoxidase, subunit E (356 aa).

Positions 2 to 106 (TTFHSLTVAK…MVPQGHFGYQ (105 aa)) constitute an FAD-binding FR-type domain. Residues 112–228 (QGRYLAIAAG…AAMMDDAETA (117 aa)) are oxidoreductase. The 2Fe-2S ferredoxin-type domain occupies 262–354 (QKVTVRQDGR…DVVVDFDAKG (93 aa)). Cys-299, Cys-304, Cys-307, and Cys-337 together coordinate [2Fe-2S] cluster.

This sequence in the N-terminal section; belongs to the FAD-binding oxidoreductase type 6 family. [2Fe-2S] cluster serves as cofactor. FAD is required as a cofactor.

Its pathway is aromatic compound metabolism; phenylacetate degradation. In terms of biological role, component of 1,2-phenylacetyl-CoA epoxidase multicomponent enzyme system which catalyzes the reduction of phenylacetyl-CoA (PA-CoA) to form 1,2-epoxyphenylacetyl-CoA. The subunit E is a reductase with a preference for NADPH and FAD, capable of reducing cytochrome c. The polypeptide is 1,2-phenylacetyl-CoA epoxidase, subunit E (paaE) (Escherichia coli (strain K12)).